Reading from the N-terminus, the 180-residue chain is Adenine phosphoribosyltransferase (180 aa).

Belongs to the purine/pyrimidine phosphoribosyltransferase family. In terms of assembly, homodimer.

The protein resides in the cytoplasm. The catalysed reaction is AMP + diphosphate = 5-phospho-alpha-D-ribose 1-diphosphate + adenine. The protein operates within purine metabolism; AMP biosynthesis via salvage pathway; AMP from adenine: step 1/1. In terms of biological role, catalyzes a salvage reaction resulting in the formation of AMP, that is energically less costly than de novo synthesis. The sequence is that of Adenine phosphoribosyltransferase from Mycobacterium avium (strain 104).